The primary structure comprises 176 residues: MEITVVKGDITEQDVDVIVNAANPGLLGGGGVDGAIHQAAGPDLLKECQEVINRIGTCPAGEAVITSAGDLQASYIIHAVGPIWKDGEHQEANKLASCYWKALDLAAGKELTSIAFPNISTGVYGFPKKLAAEVALYTVRKWAEEEYDTSIEEIRFVCFDEENLKLYNKLINSEVV.

Residues 1-175 enclose the Macro domain; the sequence is MEITVVKGDI…LYNKLINSEV (175 aa).

Belongs to the MacroD-type family.

The sequence is that of Macro domain-containing protein LMOf2365_2748 from Listeria monocytogenes serotype 4b (strain F2365).